The following is a 56-amino-acid chain: Small ribosomal subunit protein uS14 (56 aa).

Phosphoserine is present on S9. R12 is modified (omega-N-methylarginine). Residues C21, C24, C39, and C42 each contribute to the Zn(2+) site. Residue K48 is modified to N6-acetyllysine.

Belongs to the universal ribosomal protein uS14 family. In terms of assembly, component of the 40S small ribosomal subunit. Zn(2+) is required as a cofactor.

The protein resides in the cytoplasm. It is found in the cytosol. Its subcellular location is the rough endoplasmic reticulum. Component of the small ribosomal subunit. The ribosome is a large ribonucleoprotein complex responsible for the synthesis of proteins in the cell. This chain is Small ribosomal subunit protein uS14 (RPS29), found in Sus scrofa (Pig).